Reading from the N-terminus, the 219-residue chain is Proteasome subunit beta type-9 (219 aa).

A propeptide spans 1–20 (removed in mature form); it reads MLRAGAPTAGSFRTEEVHTG. Thr-21 (nucleophile) is an active-site residue. Residues Lys-53 and Lys-109 each carry the N6-acetyllysine modification.

It belongs to the peptidase T1B family. The 26S proteasome consists of a 20S proteasome core and two 19S regulatory subunits. The 20S proteasome core is composed of 28 subunits that are arranged in four stacked rings, resulting in a barrel-shaped structure. The two end rings are each formed by seven alpha subunits, and the two central rings are each formed by seven beta subunits. The catalytic chamber with the active sites is on the inside of the barrel. Component of the immunoproteasome, where it displaces the equivalent housekeeping subunit PSMB6. Component of the spermatoproteasome, a form of the proteasome specifically found in testis. In terms of processing, autocleaved. The resulting N-terminal Thr residue of the mature subunit is responsible for the nucleophile proteolytic activity.

The protein resides in the cytoplasm. Its subcellular location is the nucleus. It catalyses the reaction Cleavage of peptide bonds with very broad specificity.. Its function is as follows. The proteasome is a multicatalytic proteinase complex which is characterized by its ability to cleave peptides with Arg, Phe, Tyr, Leu, and Glu adjacent to the leaving group at neutral or slightly basic pH. The proteasome has an ATP-dependent proteolytic activity. This subunit is involved in antigen processing to generate class I binding peptides. The sequence is that of Proteasome subunit beta type-9 (Psmb9) from Mus spicilegus (Steppe mouse).